Here is a 478-residue protein sequence, read N- to C-terminus: Lysosome membrane protein 2 (478 aa).

The Cytoplasmic segment spans residues 1 to 4 (MGRC). A helical transmembrane segment spans residues 5 to 27 (CFYTAGTLSLLLLVTSVTLLVAR). Residues 28 to 433 (VFQKAVDQTI…QLKSVINTTL (406 aa)) lie on the Lumenal side of the membrane. 4 N-linked (GlcNAc...) asparagine glycosylation sites follow: Asn45, Asn68, Asn105, and Asn122. An important for interaction with GBA1 region spans residues 155-191 (LIEAMLKAYQQKLFVIHTVHELLWGYKDEILSLVHIF). Residues Asn206, Asn224, Asn249, and Asn304 are each glycosylated (N-linked (GlcNAc...) asparagine). 2 cysteine pairs are disulfide-bonded: Cys274–Cys329 and Cys312–Cys318. Asn325, Asn412, and Asn430 each carry an N-linked (GlcNAc...) asparagine glycan. The helical transmembrane segment at 434-459 (VVTNIPYIIMALGVFFGLVFTWLACR) threads the bilayer. Topologically, residues 460-478 (GQGSMDEGTADERAPLIRT) are cytoplasmic.

This sequence belongs to the CD36 family. As to quaternary structure, interacts with GBA1. Post-translationally, acylated by palmitic acid group(s). In terms of processing, heavily glycosylated. As to expression, detected in the extracts of brain, heart, lung, liver and kidney.

The protein resides in the lysosome membrane. Functionally, acts as a lysosomal receptor for glucosylceramidase (GBA1) targeting. This Mus musculus (Mouse) protein is Lysosome membrane protein 2 (Scarb2).